Consider the following 138-residue polypeptide: Transcription antitermination protein NusB (138 aa).

It belongs to the NusB family.

Its function is as follows. Involved in transcription antitermination. Required for transcription of ribosomal RNA (rRNA) genes. Binds specifically to the boxA antiterminator sequence of the ribosomal RNA (rrn) operons. In Serratia proteamaculans (strain 568), this protein is Transcription antitermination protein NusB.